The primary structure comprises 513 residues: Protein PNS1 (513 aa).

A compositionally biased stretch (pro residues) spans 1 to 13 (MSNNNYPPPPNPP). Residues 1–41 (MSNNNYPPPPNPPNYQGEEQVHNVQPDLENNQEKYYAEQPQ) form a disordered region. Residues 1–60 (MSNNNYPPPPNPPNYQGEEQVHNVQPDLENNQEKYYAEQPQPSQQFEESFKIDKPKWNDW) lie on the Cytoplasmic side of the membrane. The helical transmembrane segment at 61-81 (PFTVFFLLTVAGFIAIAGITL) threads the bilayer. Residues 82–108 (NALKKTYGLQGSSIYNSTDTFTLNTNT) are Extracellular-facing. An N-linked (GlcNAc...) asparagine glycan is attached at N97. Residues 109–129 (IILFGFIIVVGVVLSVLIIVY) form a helical membrane-spanning segment. The Cytoplasmic portion of the chain corresponds to 130–136 (ARMAPRV). The chain crosses the membrane as a helical span at residues 137–157 (FITTGLILNIILGLGTCIYYF). The Extracellular portion of the chain corresponds to 158–163 (VAHYYS). Residues 164–182 (AAIVFLVFTLFTAWCYWSC) form a helical membrane-spanning segment. The Cytoplasmic portion of the chain corresponds to 183–210 (RHRIPFSATVLEITIDVMKRYPSTLITS). A helical membrane pass occupies residues 211-231 (FIGIIVSGLFSTLFSVVIVAT). Over 232-251 (YVKYDPDSQGCDVAGGGCSQ) the chain is Extracellular. Residues 252–272 (SKLIGVLVFVFFAGYYISEVI) form a helical membrane-spanning segment. At 273–309 (KNVIHITIAGIYGTWYYLSNSDQGEPKHPALGAFKRA) the chain is on the cytoplasmic side. Residues 310–330 (MTYCFGSVCFGSLIVSIIQLI) traverse the membrane as a helical segment. Topologically, residues 331-346 (RSFVQILKQNAFGSGD) are extracellular. A helical membrane pass occupies residues 347-367 (NCAGCGFLILDFVLGFIDWIV). Over 368 to 412 (RYFNHYAYCYVALYGKSYLKSARDTFDLIRFKGMDALINDCFINT) the chain is Cytoplasmic. The chain crosses the membrane as a helical span at residues 413 to 433 (SLNLYSMFVGYVVALLAYFYL). Over 434–460 (KFTDPAYNSSGTFYAPVVAFSFLISGQ) the chain is Extracellular. The N-linked (GlcNAc...) asparagine glycan is linked to N441. A helical membrane pass occupies residues 461-481 (ITRIALTVISSGISTFFVALA). Over 482–513 (KDPEVFQMTNRDRFDEIFRNYPQVLQKITSDH) the chain is Cytoplasmic.

The protein belongs to the CTL (choline transporter-like) family.

The protein resides in the cell membrane. Functionally, probably involved in transport through the plasma membrane. This Debaryomyces hansenii (strain ATCC 36239 / CBS 767 / BCRC 21394 / JCM 1990 / NBRC 0083 / IGC 2968) (Yeast) protein is Protein PNS1 (PNS1).